The following is a 531-amino-acid chain: Efflux pump terG (531 aa).

A compositionally biased stretch (polar residues) spans 1–11 (MSSSTLEGQET). The segment at 1–27 (MSSSTLEGQETASHHSKNSPSRHGDDG) is disordered. Helical transmembrane passes span 86-106 (GKLS…ILIG), 117-137 (AIFV…GVSV), 145-165 (ILAR…ALAI), 179-199 (FAWF…FGPL), 207-227 (WIYW…IVAI), 249-269 (IDLL…FAWN), 280-300 (YVYV…YVEL), 319-339 (FVFG…FYVI), 351-371 (IQMA…ALIV), 380-400 (ASSI…LMAL), 402-422 (PVHS…TFAM), 447-467 (SVIM…AGTI), and 488-508 (TLWF…IFLL).

Belongs to the major facilitator superfamily.

The protein localises to the cell membrane. Functionally, efflux pump that might be required for efficient secretion of terrein or other secondary metabolies produced by the terrein genne cluster. The polypeptide is Efflux pump terG (Aspergillus terreus (strain NIH 2624 / FGSC A1156)).